The chain runs to 543 residues: CTP synthase (543 aa).

An amidoligase domain region spans residues 1–265; it reads MARYIFITGG…DDEVLAAFAI (265 aa). Ser-13 provides a ligand contact to CTP. Ser-13 lines the UTP pocket. 14-19 is a binding site for ATP; sequence SLGKGL. Tyr-54 contributes to the L-glutamine binding site. An ATP-binding site is contributed by Asp-71. Positions 71 and 139 each coordinate Mg(2+). CTP contacts are provided by residues 146 to 148, 186 to 191, and Lys-222; these read DIE and KTKPTQ. UTP-binding positions include 186–191 and Lys-222; that span reads KTKPTQ. 238–240 is a binding site for ATP; that stretch reads RDA. The Glutamine amidotransferase type-1 domain occupies 291–542; that stretch reads TIAIVGKYTG…VQAALVQSRL (252 aa). Gly-353 is a binding site for L-glutamine. The active-site Nucleophile; for glutamine hydrolysis is the Cys-380. Residues 381–384, Glu-404, and Arg-470 contribute to the L-glutamine site; that span reads FGMQ. Catalysis depends on residues His-515 and Glu-517.

It belongs to the CTP synthase family. In terms of assembly, homotetramer.

The enzyme catalyses UTP + L-glutamine + ATP + H2O = CTP + L-glutamate + ADP + phosphate + 2 H(+). It carries out the reaction L-glutamine + H2O = L-glutamate + NH4(+). It catalyses the reaction UTP + NH4(+) + ATP = CTP + ADP + phosphate + 2 H(+). Its pathway is pyrimidine metabolism; CTP biosynthesis via de novo pathway; CTP from UDP: step 2/2. With respect to regulation, allosterically activated by GTP, when glutamine is the substrate; GTP has no effect on the reaction when ammonia is the substrate. The allosteric effector GTP functions by stabilizing the protein conformation that binds the tetrahedral intermediate(s) formed during glutamine hydrolysis. Inhibited by the product CTP, via allosteric rather than competitive inhibition. Functionally, catalyzes the ATP-dependent amination of UTP to CTP with either L-glutamine or ammonia as the source of nitrogen. Regulates intracellular CTP levels through interactions with the four ribonucleotide triphosphates. The polypeptide is CTP synthase (Rhodopseudomonas palustris (strain ATCC BAA-98 / CGA009)).